Consider the following 93-residue polypeptide: Large ribosomal subunit protein eL31 (93 aa).

It belongs to the eukaryotic ribosomal protein eL31 family.

This is Large ribosomal subunit protein eL31 from Methanosarcina mazei (strain ATCC BAA-159 / DSM 3647 / Goe1 / Go1 / JCM 11833 / OCM 88) (Methanosarcina frisia).